Here is a 145-residue protein sequence, read N- to C-terminus: D-aminoacyl-tRNA deacylase (145 aa).

The Gly-cisPro motif, important for rejection of L-amino acids signature appears at 137-138; it reads GP.

It belongs to the DTD family. As to quaternary structure, homodimer.

The protein resides in the cytoplasm. The enzyme catalyses glycyl-tRNA(Ala) + H2O = tRNA(Ala) + glycine + H(+). The catalysed reaction is a D-aminoacyl-tRNA + H2O = a tRNA + a D-alpha-amino acid + H(+). In terms of biological role, an aminoacyl-tRNA editing enzyme that deacylates mischarged D-aminoacyl-tRNAs. Also deacylates mischarged glycyl-tRNA(Ala), protecting cells against glycine mischarging by AlaRS. Acts via tRNA-based rather than protein-based catalysis; rejects L-amino acids rather than detecting D-amino acids in the active site. By recycling D-aminoacyl-tRNA to D-amino acids and free tRNA molecules, this enzyme counteracts the toxicity associated with the formation of D-aminoacyl-tRNA entities in vivo and helps enforce protein L-homochirality. This Legionella pneumophila (strain Lens) protein is D-aminoacyl-tRNA deacylase.